The primary structure comprises 674 residues: ATP-dependent DNA helicase Hel308 (674 aa).

Residues Gln-27 and 44–51 (VPTAAGKT) contribute to the ATP site. Residues 31-197 (IEQIRKGRNV…WLDASLIKSD (167 aa)) form the Helicase ATP-binding domain. Residues 142 to 145 (DEIH) carry the DEAH box motif. One can recognise a Helicase C-terminal domain in the interval 224–411 (SINQIIRETV…EAKVRFNTLA (188 aa)).

Belongs to the helicase family. Hel308 subfamily. In terms of assembly, monomer.

It carries out the reaction Couples ATP hydrolysis with the unwinding of duplex DNA by translocating in the 3'-5' direction.. It catalyses the reaction ATP + H2O = ADP + phosphate + H(+). Its function is as follows. DNA-dependent ATPase and 3'-5' DNA helicase that may be involved in repair of stalled replication forks. The sequence is that of ATP-dependent DNA helicase Hel308 from Thermoplasma acidophilum (strain ATCC 25905 / DSM 1728 / JCM 9062 / NBRC 15155 / AMRC-C165).